The sequence spans 339 residues: Transcription initiation factor IIB (339 aa).

A TFIIB-type zinc finger spans residues 39 to 70 (EELICPVCGSKSIIKDYERAEIVCEMCGCVLQ). Residues cysteine 43, cysteine 46, cysteine 62, and cysteine 65 each contribute to the Zn(2+) site. 2 repeat units span residues 156-239 (SELD…SREL) and 250-331 (DYVP…ELTE).

This sequence belongs to the TFIIB family.

Its function is as follows. Stabilizes TBP binding to an archaeal box-A promoter. Also responsible for recruiting RNA polymerase II to the pre-initiation complex (DNA-TBP-TFIIB). This is Transcription initiation factor IIB from Methanococcus maripaludis (strain C5 / ATCC BAA-1333).